The chain runs to 163 residues: NADH-quinone oxidoreductase subunit I (163 aa).

4Fe-4S ferredoxin-type domains lie at 53–83 (LRRY…IEAG) and 94–123 (VRYD…EGPN). [4Fe-4S] cluster-binding residues include Cys63, Cys66, Cys69, Cys73, Cys103, Cys106, Cys109, and Cys113.

This sequence belongs to the complex I 23 kDa subunit family. As to quaternary structure, NDH-1 is composed of 14 different subunits. Subunits NuoA, H, J, K, L, M, N constitute the membrane sector of the complex. It depends on [4Fe-4S] cluster as a cofactor.

The protein resides in the cell inner membrane. The enzyme catalyses a quinone + NADH + 5 H(+)(in) = a quinol + NAD(+) + 4 H(+)(out). In terms of biological role, NDH-1 shuttles electrons from NADH, via FMN and iron-sulfur (Fe-S) centers, to quinones in the respiratory chain. The immediate electron acceptor for the enzyme in this species is believed to be ubiquinone. Couples the redox reaction to proton translocation (for every two electrons transferred, four hydrogen ions are translocated across the cytoplasmic membrane), and thus conserves the redox energy in a proton gradient. The polypeptide is NADH-quinone oxidoreductase subunit I (Bartonella henselae (strain ATCC 49882 / DSM 28221 / CCUG 30454 / Houston 1) (Rochalimaea henselae)).